A 333-amino-acid polypeptide reads, in one-letter code: D-fructose 1,6-bisphosphatase class 2/sedoheptulose 1,7-bisphosphatase (333 aa).

Residues D33, E57, D85, and E88 each coordinate Mn(2+). Residues 88–90 (EGT), Y119, 164–166 (RAR), and 186–188 (DGD) contribute to the substrate site. Mn(2+) is bound at residue E213.

This sequence belongs to the FBPase class 2 family. In terms of assembly, homotetramer. Mn(2+) serves as cofactor.

The enzyme catalyses beta-D-fructose 1,6-bisphosphate + H2O = beta-D-fructose 6-phosphate + phosphate. The catalysed reaction is D-sedoheptulose 1,7-bisphosphate + H2O = D-sedoheptulose 7-phosphate + phosphate. The protein operates within carbohydrate biosynthesis; Calvin cycle. Its function is as follows. Catalyzes the hydrolysis of fructose 1,6-bisphosphate (Fru 1,6-P2) and sedoheptulose 1,7-bisphosphate (Sed 1,7-P2) to fructose 6-phosphate and sedoheptulose 7-phosphate, respectively. This chain is D-fructose 1,6-bisphosphatase class 2/sedoheptulose 1,7-bisphosphatase, found in Prochlorococcus marinus (strain MIT 9515).